The sequence spans 404 residues: Acyl-[acyl-carrier-protein] desaturase 7, chloroplastic (404 aa).

A chloroplast-targeting transit peptide spans 1-39 (MAASATTSTLAVTMFGYPNRNCHLKPPATATLRFWRSAA). Glutamate 138, glutamate 176, histidine 179, glutamate 229, glutamate 262, and histidine 265 together coordinate Fe cation.

The protein belongs to the fatty acid desaturase type 2 family. Homodimer. Fe(2+) serves as cofactor.

It is found in the plastid. It localises to the chloroplast. Its pathway is lipid metabolism; fatty acid metabolism. In terms of biological role, introduces a cis double bond in the acyl chain of an acyl-[acyl-carrier protein]. This is Acyl-[acyl-carrier-protein] desaturase 7, chloroplastic from Oryza sativa subsp. indica (Rice).